Consider the following 109-residue polypeptide: Ribonuclease P protein component (109 aa).

It belongs to the RnpA family. In terms of assembly, consists of a catalytic RNA component (M1 or rnpB) and a protein subunit.

The enzyme catalyses Endonucleolytic cleavage of RNA, removing 5'-extranucleotides from tRNA precursor.. RNaseP catalyzes the removal of the 5'-leader sequence from pre-tRNA to produce the mature 5'-terminus. It can also cleave other RNA substrates such as 4.5S RNA. The protein component plays an auxiliary but essential role in vivo by binding to the 5'-leader sequence and broadening the substrate specificity of the ribozyme. The protein is Ribonuclease P protein component of Streptococcus agalactiae serotype Ia (strain ATCC 27591 / A909 / CDC SS700).